A 195-amino-acid chain; its full sequence is Imidazoleglycerol-phosphate dehydratase (195 aa).

It belongs to the imidazoleglycerol-phosphate dehydratase family.

The protein localises to the cytoplasm. It catalyses the reaction D-erythro-1-(imidazol-4-yl)glycerol 3-phosphate = 3-(imidazol-4-yl)-2-oxopropyl phosphate + H2O. It functions in the pathway amino-acid biosynthesis; L-histidine biosynthesis; L-histidine from 5-phospho-alpha-D-ribose 1-diphosphate: step 6/9. This Burkholderia pseudomallei (strain 1710b) protein is Imidazoleglycerol-phosphate dehydratase.